We begin with the raw amino-acid sequence, 195 residues long: Imidazole glycerol phosphate synthase subunit HisH 2 (195 aa).

The Glutamine amidotransferase type-1 domain occupies 2-195 (KIIIIDTACA…LISNFIKDIG (194 aa)). Cys-77 functions as the Nucleophile in the catalytic mechanism. Active-site residues include His-175 and Glu-177.

Heterodimer of HisH and HisF.

The protein localises to the cytoplasm. It carries out the reaction 5-[(5-phospho-1-deoxy-D-ribulos-1-ylimino)methylamino]-1-(5-phospho-beta-D-ribosyl)imidazole-4-carboxamide + L-glutamine = D-erythro-1-(imidazol-4-yl)glycerol 3-phosphate + 5-amino-1-(5-phospho-beta-D-ribosyl)imidazole-4-carboxamide + L-glutamate + H(+). The enzyme catalyses L-glutamine + H2O = L-glutamate + NH4(+). The protein operates within amino-acid biosynthesis; L-histidine biosynthesis; L-histidine from 5-phospho-alpha-D-ribose 1-diphosphate: step 5/9. IGPS catalyzes the conversion of PRFAR and glutamine to IGP, AICAR and glutamate. The HisH subunit provides the glutamine amidotransferase activity that produces the ammonia necessary to HisF for the synthesis of IGP and AICAR. This is Imidazole glycerol phosphate synthase subunit HisH 2 (hisH2) from Campylobacter jejuni subsp. jejuni serotype O:2 (strain ATCC 700819 / NCTC 11168).